Reading from the N-terminus, the 216-residue chain is Cytidylate kinase (216 aa).

11-19 (GPAGAGKGT) is an ATP binding site.

This sequence belongs to the cytidylate kinase family. Type 1 subfamily.

It is found in the cytoplasm. It carries out the reaction CMP + ATP = CDP + ADP. The catalysed reaction is dCMP + ATP = dCDP + ADP. The polypeptide is Cytidylate kinase (Mesorhizobium japonicum (strain LMG 29417 / CECT 9101 / MAFF 303099) (Mesorhizobium loti (strain MAFF 303099))).